A 581-amino-acid chain; its full sequence is UvrABC system protein C (581 aa).

The GIY-YIG domain maps to 15-94 (REPGVYLFEQ…IKRHRPPYNV (80 aa)). Residues 202–237 (GVLADPLRREMEAAAQNQEFERAANLRDKLGAVEAL) enclose the UVR domain.

It belongs to the UvrC family. In terms of assembly, interacts with UvrB in an incision complex.

It localises to the cytoplasm. In terms of biological role, the UvrABC repair system catalyzes the recognition and processing of DNA lesions. UvrC both incises the 5' and 3' sides of the lesion. The N-terminal half is responsible for the 3' incision and the C-terminal half is responsible for the 5' incision. The polypeptide is UvrABC system protein C (Haloarcula marismortui (strain ATCC 43049 / DSM 3752 / JCM 8966 / VKM B-1809) (Halobacterium marismortui)).